We begin with the raw amino-acid sequence, 607 residues long: Synaptotagmin-like protein 3 (607 aa).

Residues 4 to 123 (EVDLESFKEL…IKTGEWFFEE (120 aa)) enclose the RabBD domain. The disordered stretch occupies residues 221 to 279 (VGHTERRSQSDTAVNVTSRKASTPDILKAFHQEDPKHPPDPVLKQDTPPSSPTHSAVFS). Residues 230–241 (SDTAVNVTSRKA) show a composition bias toward polar residues. Over residues 248–259 (KAFHQEDPKHPP) the composition is skewed to basic and acidic residues. 2 consecutive C2 domains span residues 305–430 (VTGE…ARWY) and 458–590 (LPAG…LQWH).

Monomer. Binds NRXN1. Binds RAB27A that has been activated by GTP-binding via its N-terminus. In terms of tissue distribution, highly expressed in spleen and lung. Detected at lower levels in heart and testis.

The protein resides in the endomembrane system. In terms of biological role, may act as Rab effector protein and play a role in vesicle trafficking. Binds phospholipids in the presence of calcium ions. In Mus musculus (Mouse), this protein is Synaptotagmin-like protein 3 (Sytl3).